The following is a 548-amino-acid chain: Rop guanine nucleotide exchange factor 1 (548 aa).

Positions Met-1–Val-12 are enriched in acidic residues. The segment at Met-1–His-38 is disordered. The segment covering Ser-19–Ser-36 has biased composition (low complexity). The region spanning Asp-81–Thr-462 is the PRONE domain. The tract at residues Ser-458–Asp-548 is involved in auto-inhibition. A phosphoserine mark is found at Ser-460 and Ser-480.

In terms of assembly, interacts with ARAC10/ROP11 and FER. Forms a complex with ARAC11/ROP1 and PRK2. Interacts in vitro (via PRONE domain) with PRK1, PRK2, PRK3 and PRK4. The C-terminal region is also important for the interaction with PRK2. Phosphorylated at Ser-460 and Ser-480 by PRK2. In terms of tissue distribution, expressed in roots, cotyledons, leaves, stems, sepals, petals, anthers, pollen grains, stigmas and siliques.

The protein resides in the cytoplasm. The protein localises to the cytosol. It is found in the cell membrane. With respect to regulation, phosphorylation at Ser-460 and Ser-480 by PRK2 releases ROPGEF1 auto-inhibition, thereby activating ROPGEF1, which in turn activates ARAC11/ROP1. In terms of biological role, guanine-nucleotide exchange factor (GEF) that acts as an activator of Rop (Rho of plants) GTPases by promoting the exchange of GDP for GTP. Acts downstream of PRK2 in the control of polarized pollen tube growth by activating ARAC11/ROP1. In association with ROPGEF4, acts as a specific regulator of ARAC10/ROP11 function in ABA-mediated stomatal closure. May play a role in the Rac/Rop-signaling pathway that controls ROS-mediated root hair development. The polypeptide is Rop guanine nucleotide exchange factor 1 (ROPGEF1) (Arabidopsis thaliana (Mouse-ear cress)).